The primary structure comprises 373 residues: MKIISEGETKLMVPEESTLSKKDTVFYNPVMETNRDISVSVVQSFLDDFKRDEFLMCDPLGGSGARGIRYAKELKFNGDLKVSIGDINPSAVKMIKENLKLNELENVEVFHEDANVLLSKNFKVFNVVDLDPFGSPVPYLDSGIRASLTKGGLLCMTATDTAVLCGAYRKTCIRKYNAVPLKGDKELAVRLMIGYAVKMASKYDIGLKPIFSHVTDHYARTFMVTERGAGKADSAIENLGYIRQDSEQKSFKTFEEGSEKGYAGPFYLGEISDKNIVQNALNTAKTRNYSKRAVNILEMISRESEINQVGCFDIHELCSFIKKLVPPVNDIMENLKENGFKVTRVHYNPYGLKTDAELSDLVVLISEYHSKKY.

The region spanning 2 to 365 (KIISEGETKL…AELSDLVVLI (364 aa)) is the Trm1 methyltransferase domain. S-adenosyl-L-methionine contacts are provided by arginine 35, arginine 66, aspartate 86, aspartate 113, and alanine 114.

Belongs to the class I-like SAM-binding methyltransferase superfamily. Trm1 family.

It carries out the reaction guanosine(26) in tRNA + 2 S-adenosyl-L-methionine = N(2)-dimethylguanosine(26) in tRNA + 2 S-adenosyl-L-homocysteine + 2 H(+). Functionally, dimethylates a single guanine residue at position 26 of a number of tRNAs using S-adenosyl-L-methionine as donor of the methyl groups. This chain is tRNA (guanine(26)-N(2))-dimethyltransferase, found in Methanococcus maripaludis (Methanococcus deltae).